The primary structure comprises 492 residues: Bifunctional protein GlmU (492 aa).

Residues 1-238 form a pyrophosphorylase region; that stretch reads MRDAAVVILA…AALVAGVNDR (238 aa). UDP-N-acetyl-alpha-D-glucosamine-binding positions include 9-12, Lys-23, Gln-80, and 85-86; these read LAAG and GT. Residue Asp-111 coordinates Mg(2+). UDP-N-acetyl-alpha-D-glucosamine-binding residues include Gly-148, Glu-163, Asn-178, and Asn-236. Residue Asn-236 coordinates Mg(2+). The interval 239–259 is linker; it reads VQLADLAAVLNRRIVEGHQRA. The interval 260 to 492 is N-acetyltransferase; that stretch reads GVTIIDPAST…EDQGPEATGE (233 aa). Positions 341 and 359 each coordinate UDP-N-acetyl-alpha-D-glucosamine. His-371 (proton acceptor) is an active-site residue. UDP-N-acetyl-alpha-D-glucosamine contacts are provided by Tyr-374 and Asn-385. Residues Ala-388, 394–395, Ser-413, and Ala-431 each bind acetyl-CoA; that span reads NY. Residues 469 to 483 are compositionally biased toward low complexity; the sequence is EAAAAAGAGAGAAAE. Residues 469-492 are disordered; it reads EAAAAAGAGAGAAAEDQGPEATGE.

It in the N-terminal section; belongs to the N-acetylglucosamine-1-phosphate uridyltransferase family. In the C-terminal section; belongs to the transferase hexapeptide repeat family. As to quaternary structure, homotrimer. Mg(2+) serves as cofactor.

Its subcellular location is the cytoplasm. The enzyme catalyses alpha-D-glucosamine 1-phosphate + acetyl-CoA = N-acetyl-alpha-D-glucosamine 1-phosphate + CoA + H(+). The catalysed reaction is N-acetyl-alpha-D-glucosamine 1-phosphate + UTP + H(+) = UDP-N-acetyl-alpha-D-glucosamine + diphosphate. Its pathway is nucleotide-sugar biosynthesis; UDP-N-acetyl-alpha-D-glucosamine biosynthesis; N-acetyl-alpha-D-glucosamine 1-phosphate from alpha-D-glucosamine 6-phosphate (route II): step 2/2. It participates in nucleotide-sugar biosynthesis; UDP-N-acetyl-alpha-D-glucosamine biosynthesis; UDP-N-acetyl-alpha-D-glucosamine from N-acetyl-alpha-D-glucosamine 1-phosphate: step 1/1. It functions in the pathway bacterial outer membrane biogenesis; LPS lipid A biosynthesis. Functionally, catalyzes the last two sequential reactions in the de novo biosynthetic pathway for UDP-N-acetylglucosamine (UDP-GlcNAc). The C-terminal domain catalyzes the transfer of acetyl group from acetyl coenzyme A to glucosamine-1-phosphate (GlcN-1-P) to produce N-acetylglucosamine-1-phosphate (GlcNAc-1-P), which is converted into UDP-GlcNAc by the transfer of uridine 5-monophosphate (from uridine 5-triphosphate), a reaction catalyzed by the N-terminal domain. In Mycolicibacterium vanbaalenii (strain DSM 7251 / JCM 13017 / BCRC 16820 / KCTC 9966 / NRRL B-24157 / PYR-1) (Mycobacterium vanbaalenii), this protein is Bifunctional protein GlmU.